Here is a 441-residue protein sequence, read N- to C-terminus: Tubulin beta chain, nucleomorph (441 aa).

Residues glutamine 11, glutamate 69, serine 138, glycine 142, threonine 143, glycine 144, asparagine 204, and asparagine 226 each coordinate GTP. Residue glutamate 69 coordinates Mg(2+).

The protein belongs to the tubulin family. In terms of assembly, dimer of alpha and beta chains. A typical microtubule is a hollow water-filled tube with an outer diameter of 25 nm and an inner diameter of 15 nM. Alpha-beta heterodimers associate head-to-tail to form protofilaments running lengthwise along the microtubule wall with the beta-tubulin subunit facing the microtubule plus end conferring a structural polarity. Microtubules usually have 13 protofilaments but different protofilament numbers can be found in some organisms and specialized cells. Requires Mg(2+) as cofactor.

In terms of biological role, tubulin is the major constituent of microtubules, a cylinder consisting of laterally associated linear protofilaments composed of alpha- and beta-tubulin heterodimers. Microtubules grow by the addition of GTP-tubulin dimers to the microtubule end, where a stabilizing cap forms. Below the cap, tubulin dimers are in GDP-bound state, owing to GTPase activity of alpha-tubulin. In Guillardia theta (Cryptophyte), this protein is Tubulin beta chain, nucleomorph (tubB).